We begin with the raw amino-acid sequence, 228 residues long: Cytochrome P450 monooxygenase ataY (228 aa).

Cys-216 serves as a coordination point for heme.

This sequence belongs to the cytochrome P450 family. It depends on heme as a cofactor.

It functions in the pathway mycotoxin biosynthesis. Its function is as follows. Cytochrome P450 monooxygenase; part of the gene cluster that mediates the biosynthesis of acetylaranotin, a member of the epipolythiodioxopiperazine (ETP) class of toxins characterized by a disulfide-bridged cyclic dipeptide. The first step of acetylaranotin biosynthesis is performed by the NRPS ataP which produces diketopiperazine cyclo-L-Phe-L-Phe via the condensation of 2 phenylalanines (L-Phe). The ataC domain of ataTC then catalyzes the formation of bishydroxylation of cyclo-L-Phe-L-Phe. The glutathione S-transferase domain ataG in ataIMG further catalyzes the conjugation of two glutathiones to the bishydroxylated intermediate. Next, the dipeptidase ataJ removes the Glu residues. The following step is performed by the carbon sulfur lyase domain ataI of ataIMG which may convert the bis-cysteinyl adduct to yield an epidithiol intermediate. The ataT domain from ataTC then catalyzes the oxidation of the free dithiols, followed by a cyclization step catalyzed by the cytochrome P450 ataF. AtaF probably acts as an epoxidase to promote a dual epoxidation formation at C8 and C9 along with C8' and C9', followed by the spontaneous nucleophilic attack of the amide nitrogens N10 and N10' to yield an intermediate with the pyrrolidine partial structure. The final steps of acetylaranotin biosynthesis involve the acetylation and ring rearrangement of an epitetrathiodiketopiperazine intermediate to produce acetylaranotin. AtaH probably catalyzes the acetylation of epitetrathiodiketopiperazine to produce a diacetate and ataY is responsible for the formation of the dihydrooxepin moiety that converts the diacetate intermediate to acetylaranotin via acetylapoaranotin. Both enzymes could function independently in the absence of the other. The acetylaranotin bis-thiomethyltransferase ataS located outside of acetylaranotin gene cluster is the main thiomethyltransferase responsible for converting acetylaranotin and its related intermediates to their methylated forms. In Aspergillus terreus (strain NIH 2624 / FGSC A1156), this protein is Cytochrome P450 monooxygenase ataY.